The primary structure comprises 317 residues: Gamma-glutamyl hydrolase (317 aa).

A signal peptide spans 1 to 24 (MASLGRLLCAWVLLLCGLASPGLS). The 293-residue stretch at 25-317 (GSYERGSKRP…SSFQQAYMFN (293 aa)) folds into the Gamma-glutamyl hydrolase domain. 2 N-linked (GlcNAc...) asparagine glycosylation sites follow: asparagine 46 and asparagine 100. The active-site Nucleophile is the cysteine 133. Residues asparagine 153, asparagine 162, asparagine 188, and asparagine 202 are each glycosylated (N-linked (GlcNAc...) asparagine). The active-site Proton donor is histidine 243. Residue asparagine 306 is glycosylated (N-linked (GlcNAc...) asparagine).

It belongs to the peptidase C26 family. As to quaternary structure, homodimer.

The protein resides in the secreted. The protein localises to the extracellular space. It localises to the lysosome. It is found in the melanosome. It carries out the reaction (6S)-5,6,7,8-tetrahydrofolyl-(gamma-L-Glu)(n) + (n-1) H2O = (6S)-5,6,7,8-tetrahydrofolate + (n-1) L-glutamate. With respect to regulation, activity is altered by insulin and estrogen. Functionally, hydrolyzes the polyglutamate sidechains of pteroylpolyglutamates. Progressively removes gamma-glutamyl residues from pteroylpoly-gamma-glutamate to yield pteroyl-alpha-glutamate (folic acid) and free glutamate. May play an important role in the bioavailability of dietary pteroylpolyglutamates and in the metabolism of pteroylpolyglutamates and antifolates. Exhibits either endo- or exopeptidase activity depending upon the tissue of origin. When secreted, it acts primarily as an endopeptidase. The sequence is that of Gamma-glutamyl hydrolase (Ggh) from Rattus norvegicus (Rat).